Consider the following 496-residue polypeptide: Cobyric acid synthase (496 aa).

The 188-residue stretch at 250 to 437 (TLKVIAPALP…LHGLFESPQA (188 aa)) folds into the GATase cobBQ-type domain. The Nucleophile role is filled by Cys331. His429 is a catalytic residue.

Belongs to the CobB/CobQ family. CobQ subfamily.

The protein operates within cofactor biosynthesis; adenosylcobalamin biosynthesis. In terms of biological role, catalyzes amidations at positions B, D, E, and G on adenosylcobyrinic A,C-diamide. NH(2) groups are provided by glutamine, and one molecule of ATP is hydrogenolyzed for each amidation. This is Cobyric acid synthase from Hahella chejuensis (strain KCTC 2396).